A 178-amino-acid polypeptide reads, in one-letter code: Endoribonuclease YbeY (178 aa).

Residues His118, His122, and His128 each coordinate Zn(2+).

Belongs to the endoribonuclease YbeY family. The cofactor is Zn(2+).

The protein localises to the cytoplasm. Functionally, single strand-specific metallo-endoribonuclease involved in late-stage 70S ribosome quality control and in maturation of the 3' terminus of the 16S rRNA. The protein is Endoribonuclease YbeY of Mycobacterium leprae (strain Br4923).